Here is a 321-residue protein sequence, read N- to C-terminus: ATP-dependent 6-phosphofructokinase (321 aa).

Gly12 is a binding site for ATP. ADP contacts are provided by residues 22–26 (RGVVR) and 55–60 (RYSVSD). ATP-binding positions include 73-74 (RF) and 103-106 (GDGS). A Mg(2+)-binding site is contributed by Asp104. A substrate-binding site is contributed by 127 to 129 (TID). Catalysis depends on Asp129, which acts as the Proton acceptor. Arg156 serves as a coordination point for ADP. Residues Arg164 and 171–173 (MGR) contribute to the substrate site. ADP-binding positions include 187–189 (GCE), Arg213, and 215–217 (KRH). Residues Glu224, Arg245, and 251 to 254 (HIQR) contribute to the substrate site.

Belongs to the phosphofructokinase type A (PFKA) family. ATP-dependent PFK group I subfamily. Prokaryotic clade 'B1' sub-subfamily. In terms of assembly, homotetramer. Mg(2+) is required as a cofactor.

Its subcellular location is the cytoplasm. The catalysed reaction is beta-D-fructose 6-phosphate + ATP = beta-D-fructose 1,6-bisphosphate + ADP + H(+). It functions in the pathway carbohydrate degradation; glycolysis; D-glyceraldehyde 3-phosphate and glycerone phosphate from D-glucose: step 3/4. Its activity is regulated as follows. Allosterically activated by ADP and other diphosphonucleosides, and allosterically inhibited by phosphoenolpyruvate. Catalyzes the phosphorylation of D-fructose 6-phosphate to fructose 1,6-bisphosphate by ATP, the first committing step of glycolysis. In Haemophilus influenzae (strain 86-028NP), this protein is ATP-dependent 6-phosphofructokinase.